Reading from the N-terminus, the 346-residue chain is MNNLKWVVYFLKSRKNWIFWILFLNILMLGISLIDYDFPIDSLFYIVSLNLSLTLIFLILTFFKEVKLYRHFEKDKEIEEIKHKDLAETPFQRHTVDYLYRQILAHKDKVVDQQLQLNMHEQTITEFVHDIKTPVTAMKLLIDQEENQERKQALLFEWSRINSMLDTQLYITRLESQRKDMFFDYVSLKRMVIDEIQLTRHISQVKGIGFDIDFKVDNHVYTDIKWCRMIIRQILSNALKYSENYNVDISTELIDQHVALIIKDHGRGISKKDMPRIFERGFTSTANRNETTSSGMGLYLVDSVKDQLGIQLQVTSTIGKGTTVKLIFPLQNEIVERMSEVTNLSF.

The next 2 helical transmembrane spans lie at 18 to 38 (IFWILFLNILMLGISLIDYDF) and 43 to 63 (LFYIVSLNLSLTLIFLILTFF). One can recognise a Histidine kinase domain in the interval 126 to 332 (EFVHDIKTPV…TVKLIFPLQN (207 aa)).

As to quaternary structure, interacts with GraX.

The protein localises to the cell membrane. It carries out the reaction ATP + protein L-histidine = ADP + protein N-phospho-L-histidine.. Member of the two-component regulatory system GraR/GraS involved in resistance against cationic antimicrobial peptides (CAMPs). Functions as a sensor protein kinase which phosphorylates GraR through the auxiliary protein GraX. In turn, GraR up-regulates many genes such as adhesins, exoproteins, transporters, toxins, and proteins involved in cell wall synthesis. Down-regulates the expression of many genes involved in RNA and amino acid synthesis or glycolysis. The sequence is that of Sensor protein kinase GraS (graS) from Staphylococcus aureus (strain MRSA252).